A 445-amino-acid polypeptide reads, in one-letter code: tRNA(Ile)-lysidine synthase (445 aa).

19 to 24 (SGGIDS) contacts ATP.

This sequence belongs to the tRNA(Ile)-lysidine synthase family.

The protein localises to the cytoplasm. The catalysed reaction is cytidine(34) in tRNA(Ile2) + L-lysine + ATP = lysidine(34) in tRNA(Ile2) + AMP + diphosphate + H(+). Ligates lysine onto the cytidine present at position 34 of the AUA codon-specific tRNA(Ile) that contains the anticodon CAU, in an ATP-dependent manner. Cytidine is converted to lysidine, thus changing the amino acid specificity of the tRNA from methionine to isoleucine. The chain is tRNA(Ile)-lysidine synthase from Buchnera aphidicola subsp. Schizaphis graminum (strain Sg).